The following is a 285-amino-acid chain: Urease accessory protein UreD (285 aa).

Belongs to the UreD family. UreD, UreF and UreG form a complex that acts as a GTP-hydrolysis-dependent molecular chaperone, activating the urease apoprotein by helping to assemble the nickel containing metallocenter of UreC. The UreE protein probably delivers the nickel.

The protein resides in the cytoplasm. Its function is as follows. Required for maturation of urease via the functional incorporation of the urease nickel metallocenter. The chain is Urease accessory protein UreD from Cenarchaeum symbiosum (strain A).